A 59-amino-acid chain; its full sequence is Large ribosomal subunit protein bL35 (59 aa).

Basic residues predominate over residues 17–43 (GQIKRKHAYTSHLAPHKSTKQKRHLRK). The disordered stretch occupies residues 17-47 (GQIKRKHAYTSHLAPHKSTKQKRHLRKQATV).

It belongs to the bacterial ribosomal protein bL35 family.

The sequence is that of Large ribosomal subunit protein bL35 from Mycoplasma genitalium (strain ATCC 33530 / DSM 19775 / NCTC 10195 / G37) (Mycoplasmoides genitalium).